We begin with the raw amino-acid sequence, 326 residues long: Phospho-N-acetylmuramoyl-pentapeptide-transferase (326 aa).

10 helical membrane-spanning segments follow: residues 13-33 (ILAP…IFIP), 57-77 (GTPT…ILIM), 85-105 (EMIL…DDIL), 121-141 (MILL…NVGT), 155-175 (NLGI…TNAV), 181-201 (IDGL…IIGF), 208-228 (VAVF…FNAF), 232-252 (IFMG…IALM), 257-277 (LFVI…IIQV), and 305-325 (VKIV…GFVA).

Belongs to the glycosyltransferase 4 family. MraY subfamily. Mg(2+) is required as a cofactor.

It localises to the cell membrane. The catalysed reaction is UDP-N-acetyl-alpha-D-muramoyl-L-alanyl-gamma-D-glutamyl-meso-2,6-diaminopimeloyl-D-alanyl-D-alanine + di-trans,octa-cis-undecaprenyl phosphate = di-trans,octa-cis-undecaprenyl diphospho-N-acetyl-alpha-D-muramoyl-L-alanyl-D-glutamyl-meso-2,6-diaminopimeloyl-D-alanyl-D-alanine + UMP. It functions in the pathway cell wall biogenesis; peptidoglycan biosynthesis. In terms of biological role, catalyzes the initial step of the lipid cycle reactions in the biosynthesis of the cell wall peptidoglycan: transfers peptidoglycan precursor phospho-MurNAc-pentapeptide from UDP-MurNAc-pentapeptide onto the lipid carrier undecaprenyl phosphate, yielding undecaprenyl-pyrophosphoryl-MurNAc-pentapeptide, known as lipid I. The chain is Phospho-N-acetylmuramoyl-pentapeptide-transferase from Clostridium beijerinckii (strain ATCC 51743 / NCIMB 8052) (Clostridium acetobutylicum).